A 213-amino-acid polypeptide reads, in one-letter code: Ribosomal RNA small subunit methyltransferase G (213 aa).

Residues G75, F80, 128-129, and R144 each bind S-adenosyl-L-methionine; that span reads IE.

The protein belongs to the methyltransferase superfamily. RNA methyltransferase RsmG family.

The protein localises to the cytoplasm. The enzyme catalyses guanosine(527) in 16S rRNA + S-adenosyl-L-methionine = N(7)-methylguanosine(527) in 16S rRNA + S-adenosyl-L-homocysteine. Specifically methylates the N7 position of guanine in position 527 of 16S rRNA. The polypeptide is Ribosomal RNA small subunit methyltransferase G (Brucella suis biovar 1 (strain 1330)).